The following is a 236-amino-acid chain: MKTIVICSGGLDSVSLAHKIAAEHELLALVSFDYGQRHKKELDFAADCAKRLGVPHHLIDIGTIGAHLTGSALTDDIDVPDGHYAEETMRSTVVPNRNAIMLTIAFGLAAAQQADAVAIAVHGGDHFIYPDCRPGFIGSFNAMQAHALEGYADVTLFAPYVTVSKAAIVTDAVKYGTPFGETWSCYKGGLRHCGRCGTCVERREAFHLAGVTDPTEYEDPDFWVAATQAYAAQEVH.

7 to 17 is a binding site for ATP; the sequence is CSGGLDSVSLA. Zn(2+) contacts are provided by cysteine 185, cysteine 193, cysteine 196, and cysteine 199.

It belongs to the QueC family. Zn(2+) is required as a cofactor.

The catalysed reaction is 7-carboxy-7-deazaguanine + NH4(+) + ATP = 7-cyano-7-deazaguanine + ADP + phosphate + H2O + H(+). Its pathway is purine metabolism; 7-cyano-7-deazaguanine biosynthesis. Catalyzes the ATP-dependent conversion of 7-carboxy-7-deazaguanine (CDG) to 7-cyano-7-deazaguanine (preQ(0)). This is 7-cyano-7-deazaguanine synthase from Agrobacterium fabrum (strain C58 / ATCC 33970) (Agrobacterium tumefaciens (strain C58)).